Here is a 342-residue protein sequence, read N- to C-terminus: tRNA-specific 2-thiouridylase MnmA (342 aa).

ATP-binding positions include 6–13 (GMSGGVDS) and Leu-32. Cys-99 functions as the Nucleophile in the catalytic mechanism. Cys-99 and Cys-190 are disulfide-bonded. Gly-124 provides a ligand contact to ATP. The interaction with tRNA stretch occupies residues 140–142 (KDQ). The active-site Cysteine persulfide intermediate is the Cys-190. Positions 292 to 293 (RY) are interaction with tRNA.

Belongs to the MnmA/TRMU family.

The protein localises to the cytoplasm. It catalyses the reaction S-sulfanyl-L-cysteinyl-[protein] + uridine(34) in tRNA + AH2 + ATP = 2-thiouridine(34) in tRNA + L-cysteinyl-[protein] + A + AMP + diphosphate + H(+). Its function is as follows. Catalyzes the 2-thiolation of uridine at the wobble position (U34) of tRNA, leading to the formation of s(2)U34. The polypeptide is tRNA-specific 2-thiouridylase MnmA (Hydrogenobaculum sp. (strain Y04AAS1)).